We begin with the raw amino-acid sequence, 154 residues long: Aspartate carbamoyltransferase regulatory chain (154 aa).

Zn(2+)-binding residues include cysteine 109, cysteine 114, cysteine 138, and cysteine 141.

The protein belongs to the PyrI family. In terms of assembly, contains catalytic and regulatory chains. Requires Zn(2+) as cofactor.

Involved in allosteric regulation of aspartate carbamoyltransferase. This chain is Aspartate carbamoyltransferase regulatory chain, found in Yersinia pestis.